A 271-amino-acid polypeptide reads, in one-letter code: Short chain dehydrogenase virK (271 aa).

Leucine 13, aspartate 59, asparagine 87, tyrosine 168, lysine 172, valine 201, and threonine 203 together coordinate NADP(+). The active-site Proton donor is the tyrosine 168. Lysine 172 functions as the Lowers pKa of active site Tyr in the catalytic mechanism.

This sequence belongs to the short-chain dehydrogenases/reductases (SDR) family.

It functions in the pathway secondary metabolite biosynthesis. In terms of biological role, short chain dehydrogenase; part of the gene cluster that mediates the biosynthesis of virensols and trichoxide, fungal natural products that contain or are derived from a salicylaldehyde core. The pathway begins with the synthesis of the reduced chain in virensol C by the highly reducing polyketide synthase virA via condensation of one acetate and 8 malonate units. VirA has interesting programming rules since the first 2 ketides are fully reduced, the 3 following ketides undergo beta-dehydration, and the last 3 ketides are only reduced to beta-hydroxys to yield the trihydroxy portion. The production of aldehyde virensol C by virA alone is surprising, since virA does not contain a reductase (R) domain that is typically associated with reductive product release in HRPKS. The cupin-domain enzyme virC is involved in enhancing virA product turnover. The short-chain dehydrogenase virB then oxidizes the C-7 alcohol of virensol C to a ketone, yielding virensol D. Virensol D is further transformed to salicylaldehyde 5-deoxyaurocitrin by the short-chain dehydrogenase virD. VirD catalyzes the dehydrogenation of C-3 to form the beta-ketone aldehyde, which is followed by the generation of the nucleophilic C-2 that is required for the intramolecular aldol condensation between C-2 and C-7, itself followed by dehydration and aromatization which leads to salicylaldehyde 5-deoxyaurocitrin. While the dehydrogenation of virensol D is definitely catalyzed by virD, the aldol condensation and dehydration may be uncatalyzed or assisted by virD. The short chain dehydrogenase virG then converts salicylaldehyde 5-deoxyaurocitrin into virensol B which is further hydroxylated by the cytochrome P450 monooxygenase virE to yield the hydroquinone virensol A. VirI then may oxidize virensol A to form the quinone, while virH performs the epoxidation. Finally, the two remaining short-chain dehydrogenases, virK and virL, are probably responsible for reducing the ketones to the corresponding alcohols to furnish the epoxycyclohexanol structure in trichoxide. In Hypocrea virens (strain Gv29-8 / FGSC 10586) (Gliocladium virens), this protein is Short chain dehydrogenase virK.